The primary structure comprises 284 residues: D-tagatose-1,6-bisphosphate aldolase subunit GatY (284 aa).

Asp82 acts as the Proton donor in catalysis. Zn(2+) contacts are provided by His83 and His180. Gly181 provides a ligand contact to dihydroxyacetone phosphate. His208 contributes to the Zn(2+) binding site. Residues 209–211 (GAS) and 230–233 (NVAT) contribute to the dihydroxyacetone phosphate site.

It belongs to the class II fructose-bisphosphate aldolase family. TagBP aldolase GatY subfamily. Forms a complex with GatZ. Zn(2+) is required as a cofactor.

The enzyme catalyses D-tagatofuranose 1,6-bisphosphate = D-glyceraldehyde 3-phosphate + dihydroxyacetone phosphate. It functions in the pathway carbohydrate metabolism; D-tagatose 6-phosphate degradation; D-glyceraldehyde 3-phosphate and glycerone phosphate from D-tagatose 6-phosphate: step 2/2. Its function is as follows. Catalytic subunit of the tagatose-1,6-bisphosphate aldolase GatYZ, which catalyzes the reversible aldol condensation of dihydroxyacetone phosphate (DHAP or glycerone-phosphate) with glyceraldehyde 3-phosphate (G3P) to produce tagatose 1,6-bisphosphate (TBP). Requires GatZ subunit for full activity and stability. Is involved in the catabolism of galactitol. The polypeptide is D-tagatose-1,6-bisphosphate aldolase subunit GatY (Escherichia coli O6:H1 (strain CFT073 / ATCC 700928 / UPEC)).